The sequence spans 157 residues: Protein Smg homolog (157 aa).

The protein belongs to the Smg family.

The polypeptide is Protein Smg homolog (Aliivibrio salmonicida (strain LFI1238) (Vibrio salmonicida (strain LFI1238))).